The sequence spans 389 residues: Glutamate 5-kinase (389 aa).

Lys-16 contacts ATP. Residues Ser-56, Asp-143, and Asn-155 each contribute to the substrate site. 175 to 176 (SD) is an ATP binding site. Residues 281–358 (AGELHVDDGA…AEIEAILGYA (78 aa)) enclose the PUA domain.

Belongs to the glutamate 5-kinase family.

The protein localises to the cytoplasm. It carries out the reaction L-glutamate + ATP = L-glutamyl 5-phosphate + ADP. It functions in the pathway amino-acid biosynthesis; L-proline biosynthesis; L-glutamate 5-semialdehyde from L-glutamate: step 1/2. Catalyzes the transfer of a phosphate group to glutamate to form L-glutamate 5-phosphate. The polypeptide is Glutamate 5-kinase (Rhizobium etli (strain CIAT 652)).